We begin with the raw amino-acid sequence, 462 residues long: General transcription factor IIH subunit 4 (462 aa).

It belongs to the TFB2 family. As to quaternary structure, component of the 7-subunit TFIIH core complex composed of XPB/ERCC3, XPD/ERCC2, GTF2H1, GTF2H2, GTF2H3, GTF2H4 and GTF2H5, which is active in NER. The core complex associates with the 3-subunit CDK-activating kinase (CAK) module composed of CCNH/cyclin H, CDK7 and MNAT1 to form the 10-subunit holoenzyme (holo-TFIIH) active in transcription. Part of TBP-based Pol II pre-initiation complex (PIC), in which Pol II core assembles with general transcription factors and other specific initiation factors including GTF2E1, GTF2E2, GTF2F1, GTF2F2, TCEA1, ERCC2, ERCC3, GTF2H2, GTF2H3, GTF2H4, GTF2H5, GTF2A1, GTF2A2, GTF2B and TBP; this large multi-subunit PIC complex mediates DNA unwinding and targets Pol II core to the transcription start site where the first phosphodiester bond forms.

It is found in the nucleus. Functionally, component of the general transcription and DNA repair factor IIH (TFIIH) core complex, which is involved in general and transcription-coupled nucleotide excision repair (NER) of damaged DNA and, when complexed to CAK, in RNA transcription by RNA polymerase II. In NER, TFIIH acts by opening DNA around the lesion to allow the excision of the damaged oligonucleotide and its replacement by a new DNA fragment. In transcription, TFIIH has an essential role in transcription initiation. When the pre-initiation complex (PIC) has been established, TFIIH is required for promoter opening and promoter escape. Phosphorylation of the C-terminal tail (CTD) of the largest subunit of RNA polymerase II by the kinase module CAK controls the initiation of transcription. Its function is as follows. Stimulates the ATPase activity of TFIIH subunit XPB/ERCC3. In Homo sapiens (Human), this protein is General transcription factor IIH subunit 4 (GTF2H4).